The following is a 386-amino-acid chain: MLGLPGEMQYVPGIHSPNEGPRPMTIQRKQTREVRIGKVRIGGANPVVVQSMTNTDTRDVEQTVEQIRQLQEAGCEIVRLAVLNEDAAWAIKPIRSQVSVPLVADIHFDHRLAVSALEAGVDALRINPGNIGTRAAVDRVVDAAKAHNAVIRIGVNSGSLETDLIDQYGGPTPEAMVESAFRHIRMLEDRNFGDIKVSLKSSSVSRCIEAYTLLSAKCDYPLHIGVTEAGTVLRGSIKSAVGLGVLLWQGIGDTLRVSLTSDPVAEMAVAWEILRSLGLRSRGPEIIACPTCGRCEIGLIALAEEVERRLEGETESFKVAVMGCVVNGPGEAREADLGIAGGRDKGIIFRKGEIVRTVKGGSNLLAAFMEELDTFLAHRRAERKDD.

[4Fe-4S] cluster is bound by residues cysteine 289, cysteine 292, cysteine 324, and glutamate 331.

This sequence belongs to the IspG family. [4Fe-4S] cluster is required as a cofactor.

It carries out the reaction (2E)-4-hydroxy-3-methylbut-2-enyl diphosphate + oxidized [flavodoxin] + H2O + 2 H(+) = 2-C-methyl-D-erythritol 2,4-cyclic diphosphate + reduced [flavodoxin]. The protein operates within isoprenoid biosynthesis; isopentenyl diphosphate biosynthesis via DXP pathway; isopentenyl diphosphate from 1-deoxy-D-xylulose 5-phosphate: step 5/6. In terms of biological role, converts 2C-methyl-D-erythritol 2,4-cyclodiphosphate (ME-2,4cPP) into 1-hydroxy-2-methyl-2-(E)-butenyl 4-diphosphate. The protein is 4-hydroxy-3-methylbut-2-en-1-yl diphosphate synthase (flavodoxin) of Nitratidesulfovibrio vulgaris (strain ATCC 29579 / DSM 644 / CCUG 34227 / NCIMB 8303 / VKM B-1760 / Hildenborough) (Desulfovibrio vulgaris).